The following is a 494-amino-acid chain: Subtilisin-like serine protease EN45_078720 (494 aa).

The N-terminal stretch at 1-16 (MKGFLSLTLLPLLVAA) is a signal peptide. Positions 17-136 (SPVAVNSIHN…IEKDSEVRTM (120 aa)) are cleaved as a propeptide — removed in mature form. Residues 43-136 (SYIVVFKKHV…IEKDSEVRTM (94 aa)) enclose the Inhibitor I9 domain. Residues 146–448 (PWGLARISHR…GGSANYTKIL (303 aa)) form the Peptidase S8 domain. IgE-binding stretches follow at residues 180–198 (VIDT…RANW) and 209–231 (EDGN…GVAK). Catalysis depends on charge relay system residues aspartate 182 and histidine 214. 2 N-linked (GlcNAc...) asparagine glycosylation sites follow: asparagine 244 and asparagine 280. The active-site Charge relay system is the serine 376. Residue asparagine 443 is glycosylated (N-linked (GlcNAc...) asparagine). Residues 454 to 494 (KAHNAETTVEDRIGGIIDSAEKAFHKELGAIYSEIKDAVSA) constitute a propeptide, removed in mature form.

Belongs to the peptidase S8 family.

Functionally, serine protease. The sequence is that of Subtilisin-like serine protease EN45_078720 from Penicillium chrysogenum (Penicillium notatum).